The following is a 255-amino-acid chain: MEKLVLIKVGGKIVEEEETLRQLLNDFAAIEGYKVLVHGGGRSATKLAAQLGIESKMVNGRRITDAETLKVVTMVYGGLVNKNIVAGLQALGVNALGLTGADMNLMRSDKRPVAEVDYGFVGDVKEVNADLLASLIHQGIVPVLAPLTHDKQGHMLNTNADTIAGEAAKALAKHFEVTLMFCFEKKGVLLDENDDESVIPEIDRIAFKGYVEQGIIQGGMIPKLENAYQAIDAGVKQVIITQASEIHQGKGTRVF.

Substrate-binding positions include 40 to 41 (GG), Arg62, and Asn157.

Belongs to the acetylglutamate kinase family. ArgB subfamily.

It is found in the cytoplasm. The enzyme catalyses N-acetyl-L-glutamate + ATP = N-acetyl-L-glutamyl 5-phosphate + ADP. It participates in amino-acid biosynthesis; L-arginine biosynthesis; N(2)-acetyl-L-ornithine from L-glutamate: step 2/4. In terms of biological role, catalyzes the ATP-dependent phosphorylation of N-acetyl-L-glutamate. The polypeptide is Acetylglutamate kinase (Parabacteroides distasonis (strain ATCC 8503 / DSM 20701 / CIP 104284 / JCM 5825 / NCTC 11152)).